Consider the following 99-residue polypeptide: Integration host factor subunit alpha (99 aa).

It belongs to the bacterial histone-like protein family. As to quaternary structure, heterodimer of an alpha and a beta chain.

Its function is as follows. This protein is one of the two subunits of integration host factor, a specific DNA-binding protein that functions in genetic recombination as well as in transcriptional and translational control. The chain is Integration host factor subunit alpha from Thioalkalivibrio sulfidiphilus (strain HL-EbGR7).